A 320-amino-acid chain; its full sequence is Cytochrome f (320 aa).

The N-terminal stretch at 1-35 is a signal peptide; that stretch reads MQIRNTFSSLKGEITRFISVSLMIYIITRASISNA. Heme contacts are provided by Tyr36, Cys56, Cys59, and His60. Residues 286–306 form a helical membrane-spanning segment; that stretch reads VQGLLFFLASVVLAQIFLVLK.

This sequence belongs to the cytochrome f family. As to quaternary structure, the 4 large subunits of the cytochrome b6-f complex are cytochrome b6, subunit IV (17 kDa polypeptide, petD), cytochrome f and the Rieske protein, while the 4 small subunits are PetG, PetL, PetM and PetN. The complex functions as a dimer. It depends on heme as a cofactor.

It is found in the plastid. The protein localises to the chloroplast thylakoid membrane. Its function is as follows. Component of the cytochrome b6-f complex, which mediates electron transfer between photosystem II (PSII) and photosystem I (PSI), cyclic electron flow around PSI, and state transitions. This Citrus sinensis (Sweet orange) protein is Cytochrome f.